Here is a 119-residue protein sequence, read N- to C-terminus: Large ribosomal subunit protein uL24 (119 aa).

The protein belongs to the universal ribosomal protein uL24 family. Part of the 50S ribosomal subunit.

Functionally, one of two assembly initiator proteins, it binds directly to the 5'-end of the 23S rRNA, where it nucleates assembly of the 50S subunit. Its function is as follows. Located at the polypeptide exit tunnel on the outside of the subunit. The polypeptide is Large ribosomal subunit protein uL24 (Haloquadratum walsbyi (strain DSM 16790 / HBSQ001)).